The primary structure comprises 316 residues: Methionyl-tRNA formyltransferase (316 aa).

(6S)-5,6,7,8-tetrahydrofolate is bound at residue 112-115 (SLLP).

This sequence belongs to the Fmt family.

The catalysed reaction is L-methionyl-tRNA(fMet) + (6R)-10-formyltetrahydrofolate = N-formyl-L-methionyl-tRNA(fMet) + (6S)-5,6,7,8-tetrahydrofolate + H(+). In terms of biological role, attaches a formyl group to the free amino group of methionyl-tRNA(fMet). The formyl group appears to play a dual role in the initiator identity of N-formylmethionyl-tRNA by promoting its recognition by IF2 and preventing the misappropriation of this tRNA by the elongation apparatus. The chain is Methionyl-tRNA formyltransferase from Actinobacillus pleuropneumoniae serotype 7 (strain AP76).